Here is a 373-residue protein sequence, read N- to C-terminus: Spore coat polysaccharide biosynthesis protein SpsE (373 aa).

The AFP-like domain occupies 305-367; the sequence is GIFTTAPIQK…GIVWDDILLK (63 aa).

It participates in spore coat biogenesis; spore coat polysaccharide biosynthesis. The polypeptide is Spore coat polysaccharide biosynthesis protein SpsE (spsE) (Bacillus subtilis (strain 168)).